Reading from the N-terminus, the 439-residue chain is MDGHSNTSVILHTYQQQQSQLIPSIIPQTLPDGYGLTTTISQPDFSGTNAFINTNPWNTTTFPTYRDNQYTNEVSVLNYPTVYDDFSKESTAGTLSDPSLHGSNSSSSTSDVGSSVDCSISPEPILMPCVKRGRPTENPCWAYFHRIDDQLVKCRLCTKVVRSACATNMTKHLERHHTDDYQKVTGQLKLFRMNDAGIRSKMHYQVADTPLTPIPVLPNSYVLPKMDPMEAFDASQYYTMQPDSTAINAQPFPQFDQPQTSADSQTWPLTHFWPNGAQNNMMPQLGEPSTSAIGASVIQEIRKLNLDSDQKRLELEMDQNRRLLLAQKADEKGRVVKTTTKPYQKRNRKTEHPVWAFFKRTGDGNAECIICQGVVKSPCSSNFMRHLMRHHSTEYNDVYLKWIEKRNVTHPGIHCTSVPPPISFPNKDNVRTEPIFTVK.

The tract at residues 93 to 116 (GTLSDPSLHGSNSSSSTSDVGSSV) is disordered. Residues 96–116 (SDPSLHGSNSSSSTSDVGSSV) show a composition bias toward low complexity. 2 BED-type zinc fingers span residues 135–184 (PTEN…YQKV) and 349–398 (KTEH…YNDV). Zn(2+)-binding residues include C154, C157, H172, H177, C368, C371, H386, and H391.

Its function is as follows. Involved in cuticle function and is essential for normal morphological development. The chain is Protein dumpy-20 (dpy-20) from Caenorhabditis briggsae.